The chain runs to 254 residues: Caffeoyl-CoA O-methyltransferase (254 aa).

The disordered stretch occupies residues 1–25 (MATTNVEENKQTQEQQPKEIKHQEV). Over residues 7–25 (EENKQTQEQQPKEIKHQEV) the composition is skewed to basic and acidic residues. Lysine 28 is a substrate binding site. Residues threonine 70, glutamate 92, 94 to 95 (GV), serine 100, aspartate 118, and alanine 147 each bind S-adenosyl-L-methionine. Aspartate 170 contributes to the substrate binding site. Aspartate 170 lines the a divalent metal cation pocket. Residue aspartate 172 coordinates S-adenosyl-L-methionine. A divalent metal cation contacts are provided by aspartate 196 and asparagine 197. Asparagine 201 lines the substrate pocket.

It belongs to the class I-like SAM-binding methyltransferase superfamily. Cation-dependent O-methyltransferase family. CCoAMT subfamily. The cofactor is a divalent metal cation.

It catalyses the reaction (E)-caffeoyl-CoA + S-adenosyl-L-methionine = (E)-feruloyl-CoA + S-adenosyl-L-homocysteine + H(+). It participates in aromatic compound metabolism; phenylpropanoid biosynthesis. Its function is as follows. Methylates caffeoyl-CoA to feruloyl-CoA and 5-hydroxyferuloyl-CoA to sinapoyl-CoA. Plays a role in the synthesis of feruloylated polysaccharides. Involved in the reinforcement of the plant cell wall. Also involved in the responding to wounding or pathogen challenge by the increased formation of cell wall-bound ferulic acid polymers. This chain is Caffeoyl-CoA O-methyltransferase, found in Mesembryanthemum crystallinum (Common ice plant).